Reading from the N-terminus, the 347-residue chain is Adenine deaminase (347 aa).

Residues His16, His18, and His204 each contribute to the Zn(2+) site. Glu207 (proton donor) is an active-site residue. Asp285 contributes to the Zn(2+) binding site. Substrate is bound at residue Asp286.

Belongs to the metallo-dependent hydrolases superfamily. Adenosine and AMP deaminases family. Adenine deaminase type 2 subfamily. Zn(2+) is required as a cofactor.

It is found in the cytoplasm. The protein localises to the nucleus. The enzyme catalyses adenine + H2O + H(+) = hypoxanthine + NH4(+). In terms of biological role, catalyzes the hydrolytic deamination of adenine to hypoxanthine. Plays an important role in the purine salvage pathway and in nitrogen catabolism. The chain is Adenine deaminase from Candida glabrata (strain ATCC 2001 / BCRC 20586 / JCM 3761 / NBRC 0622 / NRRL Y-65 / CBS 138) (Yeast).